A 1194-amino-acid polypeptide reads, in one-letter code: Multidrug efflux ATP-binding/permease protein Rv0194 (1194 aa).

The next 6 membrane-spanning stretches (helical) occupy residues 20–40 (LLLG…VPLV), 56–76 (LAPW…LMYV), 130–150 (LLFD…GVAV), 153–173 (WLSV…GLIA), 258–278 (FALG…FVAF), and 279–299 (WACL…LTIA). The region spanning 21-301 (LLGFGAALAG…LAGMLTIAQQ (281 aa)) is the ABC transmembrane type-1 1 domain. The region spanning 334-568 (LEFQRVSFGY…CPRYRELLSP (235 aa)) is the ABC transporter 1 domain. 367–374 (GAPGSGKS) serves as a coordination point for ATP. 6 helical membrane passes run 628-648 (ALSL…PLLI), 660-680 (VLSA…IRWV), 743-763 (LVVA…LLAI), 765-785 (ARLV…TWQF), 847-867 (LLAL…TLVL), and 878-898 (VISV…YTPI). One can recognise an ABC transmembrane type-1 2 domain in the interval 628 to 910 (ALSLLLVAVQ…LAQMFDDYQR (283 aa)). Positions 942–1177 (VVFDAVHYSY…GGHYSRLWAA (236 aa)) constitute an ABC transporter 2 domain. Residue 976–983 (GSTGSGKS) coordinates ATP.

The protein belongs to the ABC transporter superfamily. Lipid exporter (TC 3.A.1.106) family.

The protein localises to the cell inner membrane. Efflux is inhibited by reserpine. Overexpression in M.smegmatis increases resistance to erythromycin, ampicillin, novobiocin and vancomycin. It also reduces accumulation of ethidium bromide in the cell. The protein is Multidrug efflux ATP-binding/permease protein Rv0194 of Mycobacterium tuberculosis (strain ATCC 25618 / H37Rv).